Here is a 184-residue protein sequence, read N- to C-terminus: NADH-quinone oxidoreductase subunit B (184 aa).

Residues C37, C38, C103, and C132 each coordinate [4Fe-4S] cluster.

It belongs to the complex I 20 kDa subunit family. NDH-1 is composed of 14 different subunits. Subunits NuoB, C, D, E, F, and G constitute the peripheral sector of the complex. It depends on [4Fe-4S] cluster as a cofactor.

It is found in the cell membrane. The catalysed reaction is a quinone + NADH + 5 H(+)(in) = a quinol + NAD(+) + 4 H(+)(out). Its function is as follows. NDH-1 shuttles electrons from NADH, via FMN and iron-sulfur (Fe-S) centers, to quinones in the respiratory chain. The immediate electron acceptor for the enzyme in this species is believed to be a menaquinone. Couples the redox reaction to proton translocation (for every two electrons transferred, four hydrogen ions are translocated across the cytoplasmic membrane), and thus conserves the redox energy in a proton gradient. The sequence is that of NADH-quinone oxidoreductase subunit B from Rhodococcus erythropolis (strain PR4 / NBRC 100887).